An 871-amino-acid polypeptide reads, in one-letter code: Translation initiation factor IF-2 (871 aa).

2 disordered regions span residues 60-101 (KKNI…QEVK) and 184-203 (ESLKKKKKEKKSFVASKKES). The segment covering 61 to 72 (KNIKTPTAKKPK) has biased composition (basic residues). Residues 73–101 (KENIKEQEKLNESEKKEPKKEEKLKQEVK) are compositionally biased toward basic and acidic residues. The tr-type G domain maps to 370–537 (TRAPVITIMG…IVLLQADILE (168 aa)). Positions 379-386 (GHVDHGKT) are G1. Position 379–386 (379–386 (GHVDHGKT)) interacts with GTP. Positions 404–408 (GITQH) are G2. The interval 425–428 (DTPG) is G3. Residues 425–429 (DTPGH) and 479–482 (NKMD) each bind GTP. The segment at 479 to 482 (NKMD) is G4. The G5 stretch occupies residues 515–517 (SAK).

This sequence belongs to the TRAFAC class translation factor GTPase superfamily. Classic translation factor GTPase family. IF-2 subfamily.

The protein localises to the cytoplasm. One of the essential components for the initiation of protein synthesis. Protects formylmethionyl-tRNA from spontaneous hydrolysis and promotes its binding to the 30S ribosomal subunits. Also involved in the hydrolysis of GTP during the formation of the 70S ribosomal complex. The chain is Translation initiation factor IF-2 from Campylobacter jejuni (strain RM1221).